The following is a 250-amino-acid chain: Proteasome subunit alpha (250 aa).

It belongs to the peptidase T1A family. In terms of assembly, the 20S proteasome core is composed of 14 alpha and 14 beta subunits that assemble into four stacked heptameric rings, resulting in a barrel-shaped structure. The two inner rings, each composed of seven catalytic beta subunits, are sandwiched by two outer rings, each composed of seven alpha subunits. The catalytic chamber with the active sites is on the inside of the barrel. Has a gated structure, the ends of the cylinder being occluded by the N-termini of the alpha-subunits. Is capped at one or both ends by the proteasome regulatory ATPase, PAN.

It is found in the cytoplasm. With respect to regulation, the formation of the proteasomal ATPase PAN-20S proteasome complex, via the docking of the C-termini of PAN into the intersubunit pockets in the alpha-rings, triggers opening of the gate for substrate entry. Interconversion between the open-gate and close-gate conformations leads to a dynamic regulation of the 20S proteasome proteolysis activity. Its function is as follows. Component of the proteasome core, a large protease complex with broad specificity involved in protein degradation. This Methanobrevibacter smithii (strain ATCC 35061 / DSM 861 / OCM 144 / PS) protein is Proteasome subunit alpha.